The chain runs to 488 residues: Transmembrane protein 39A (488 aa).

N-linked (GlcNAc...) asparagine glycosylation is found at asparagine 31 and asparagine 39. The next 3 membrane-spanning stretches (helical) occupy residues 72 to 92 (GLLF…IQYI), 110 to 130 (TSLN…VMLA), and 155 to 175 (LITA…WTLV). Residue asparagine 180 is glycosylated (N-linked (GlcNAc...) asparagine). Transmembrane regions (helical) follow at residues 182–202 (SVLN…LCCF), 287–307 (EVLF…LCFV), 319–339 (CEHL…QLLP), 420–440 (LLNL…YSLL), and 446–466 (NHTL…FKLL).

Belongs to the TMEM39 family.

It localises to the endoplasmic reticulum membrane. Its function is as follows. Regulates autophagy by controlling the spatial distribution and levels of the intracellular phosphatidylinositol 4-phosphate (PtdIns(4)P) pools. Modulates (PtdIns(4)P) levels by regulating the ER-to-Golgi trafficking of the phosphatidylinositide phosphatase SACM1L. The sequence is that of Transmembrane protein 39A (tmem39a) from Xenopus tropicalis (Western clawed frog).